The following is a 1160-amino-acid chain: ATP-dependent helicase/deoxyribonuclease subunit B (1160 aa).

This sequence belongs to the helicase family. AddB/RexB type 2 subfamily. As to quaternary structure, heterodimer of AddA and RexB. Requires Mg(2+) as cofactor.

The heterodimer acts as both an ATP-dependent DNA helicase and an ATP-dependent, dual-direction single-stranded exonuclease. Recognizes the chi site generating a DNA molecule suitable for the initiation of homologous recombination. This subunit has 5' -&gt; 3' nuclease activity but not helicase activity. This chain is ATP-dependent helicase/deoxyribonuclease subunit B, found in Lactobacillus helveticus (strain DPC 4571).